The sequence spans 177 residues: ATP synthase subunit delta (177 aa).

It belongs to the ATPase delta chain family. F-type ATPases have 2 components, F(1) - the catalytic core - and F(0) - the membrane proton channel. F(1) has five subunits: alpha(3), beta(3), gamma(1), delta(1), epsilon(1). F(0) has three main subunits: a(1), b(2) and c(10-14). The alpha and beta chains form an alternating ring which encloses part of the gamma chain. F(1) is attached to F(0) by a central stalk formed by the gamma and epsilon chains, while a peripheral stalk is formed by the delta and b chains.

The protein localises to the cell inner membrane. Functionally, f(1)F(0) ATP synthase produces ATP from ADP in the presence of a proton or sodium gradient. F-type ATPases consist of two structural domains, F(1) containing the extramembraneous catalytic core and F(0) containing the membrane proton channel, linked together by a central stalk and a peripheral stalk. During catalysis, ATP synthesis in the catalytic domain of F(1) is coupled via a rotary mechanism of the central stalk subunits to proton translocation. Its function is as follows. This protein is part of the stalk that links CF(0) to CF(1). It either transmits conformational changes from CF(0) to CF(1) or is implicated in proton conduction. The chain is ATP synthase subunit delta from Azobacteroides pseudotrichonymphae genomovar. CFP2.